A 353-amino-acid chain; its full sequence is Mitochondrial glutathione transporter SLC25A40 (353 aa).

Solcar repeat units lie at residues 14–132 (ITPF…LFAL), 140–224 (RSDL…GKWW), and 234–328 (PTVA…GKAF). 6 helical membrane passes run 20–40 (MMAS…LDVV), 104–124 (LWSG…IYFT), 143–163 (LAPL…ISPL), 200–221 (WGPT…YEKG), 237–257 (AITF…TLPF), and 299–319 (GLFA…AIMI).

This sequence belongs to the mitochondrial carrier (TC 2.A.29) family.

It localises to the mitochondrion inner membrane. The catalysed reaction is glutathione(in) = glutathione(out). In terms of biological role, probable mitochondrial transporter required for glutathione import into mitochondria. Glutathione, which plays key roles in oxidative metabolism, is produced exclusively in the cytosol and is imported in many organelles. Mitochondrial glutathione is required for the activity and stability of proteins containing iron-sulfur clusters. This Danio rerio (Zebrafish) protein is Mitochondrial glutathione transporter SLC25A40.